Consider the following 213-residue polypeptide: tRNA (guanine-N(7)-)-methyltransferase (213 aa).

S-adenosyl-L-methionine-binding residues include Glu44, Asp69, Asp96, and Asp118. Asp118 is a catalytic residue. Lys122 serves as a coordination point for substrate. Residues 124–129 (RHEKRR) form an interaction with RNA region. Substrate contacts are provided by residues Asp154 and 191-194 (TEYE).

The protein belongs to the class I-like SAM-binding methyltransferase superfamily. TrmB family.

The enzyme catalyses guanosine(46) in tRNA + S-adenosyl-L-methionine = N(7)-methylguanosine(46) in tRNA + S-adenosyl-L-homocysteine. It functions in the pathway tRNA modification; N(7)-methylguanine-tRNA biosynthesis. Catalyzes the formation of N(7)-methylguanine at position 46 (m7G46) in tRNA. This Streptococcus thermophilus (strain CNRZ 1066) protein is tRNA (guanine-N(7)-)-methyltransferase.